We begin with the raw amino-acid sequence, 258 residues long: Global transcriptional regulator CodY (258 aa).

The interval 1–156 (MSTLLDKTRK…SATIVGLEIL (156 aa)) is GAF domain. The H-T-H motif DNA-binding region spans 204–223 (ASKIADKVGITRSVIVNALR).

This sequence belongs to the CodY family.

The protein localises to the cytoplasm. DNA-binding global transcriptional regulator which is involved in the adaptive response to starvation and acts by directly or indirectly controlling the expression of numerous genes in response to nutrient availability. During rapid exponential growth, CodY is highly active and represses genes whose products allow adaptation to nutrient depletion. The protein is Global transcriptional regulator CodY of Clostridium kluyveri (strain NBRC 12016).